Consider the following 208-residue polypeptide: Large ribosomal subunit protein bL25 (208 aa).

The interval 188 to 208 (AVETETEEETTTGESPAQPAE) is disordered.

Belongs to the bacterial ribosomal protein bL25 family. CTC subfamily. Part of the 50S ribosomal subunit; part of the 5S rRNA/L5/L18/L25 subcomplex. Contacts the 5S rRNA. Binds to the 5S rRNA independently of L5 and L18.

Its function is as follows. This is one of the proteins that binds to the 5S RNA in the ribosome where it forms part of the central protuberance. The sequence is that of Large ribosomal subunit protein bL25 from Moorella thermoacetica (strain ATCC 39073 / JCM 9320).